A 193-amino-acid polypeptide reads, in one-letter code: MSALRLIVGLGNPGPEHAQTRHNAGFRFVDALAERTGARWGLDSKLFGETAKADIAGHTVWLLKPATFMNLSGKSITAALRFWKIEPEQLLVAHDELDLAPGTARLKFDGGHGGQNGLRDTIRLLGHGKFHRLRVGIGHPGHKDRVVPWVLGRAGRDDDMAIGEAVDAAIDALPLALDGNFNEAMKRLHTPKK.

His17 contacts tRNA. His22 (proton acceptor) is an active-site residue. Residues Phe68, Asn70, and Asn116 each coordinate tRNA.

The protein belongs to the PTH family. As to quaternary structure, monomer.

Its subcellular location is the cytoplasm. The enzyme catalyses an N-acyl-L-alpha-aminoacyl-tRNA + H2O = an N-acyl-L-amino acid + a tRNA + H(+). Hydrolyzes ribosome-free peptidyl-tRNAs (with 1 or more amino acids incorporated), which drop off the ribosome during protein synthesis, or as a result of ribosome stalling. In terms of biological role, catalyzes the release of premature peptidyl moieties from peptidyl-tRNA molecules trapped in stalled 50S ribosomal subunits, and thus maintains levels of free tRNAs and 50S ribosomes. This is Peptidyl-tRNA hydrolase from Xanthomonas campestris pv. campestris (strain 8004).